Reading from the N-terminus, the 171-residue chain is MAIREIISIPDKRLRRVSEPVEKITSEVRALAEDMFETMYDAPGIGLAAIQVAVPLRLITMDLAKKEGESAPRVFINPEILSKSEDIAVYEEGCLSIPEYYEEVERPASVRVRFMDLEGEVHEEDAEGLFATCIQHEIDHLNGVLFIDYLSKLKRDRVMKKFTKAAKLAAK.

Residues Cys-94 and His-136 each contribute to the Fe cation site. Glu-137 is a catalytic residue. His-140 contributes to the Fe cation binding site.

The protein belongs to the polypeptide deformylase family. The cofactor is Fe(2+).

It catalyses the reaction N-terminal N-formyl-L-methionyl-[peptide] + H2O = N-terminal L-methionyl-[peptide] + formate. Its function is as follows. Removes the formyl group from the N-terminal Met of newly synthesized proteins. Requires at least a dipeptide for an efficient rate of reaction. N-terminal L-methionine is a prerequisite for activity but the enzyme has broad specificity at other positions. This Afipia carboxidovorans (strain ATCC 49405 / DSM 1227 / KCTC 32145 / OM5) (Oligotropha carboxidovorans) protein is Peptide deformylase.